The following is a 664-amino-acid chain: Ubiquinol oxidase subunit 1 (664 aa).

A run of 2 helical transmembrane segments spans residues 15 to 35 and 57 to 77; these read PILV…LGLI and LAAM…ADAI. A heme b-binding site is contributed by His106. The next 12 helical transmembrane spans lie at 109–129, 136–156, 190–210, 233–253, 278–298, 316–336, 347–367, 383–403, 414–434, 456–476, 490–510, and 603–623; these read IMIF…IVPL, VAFP…FILV, YIWA…NFFV, LCAS…VGLL, LIWA…FGVF, MVYA…HHFF, FFGI…FNWL, WAVG…MLAI, LFLI…GYIC, AFWF…IVGF, AWHP…LGIA, and ALIF…VGLV. His284, Tyr288, His333, and His334 together coordinate Cu cation. The segment at residues 284-288 is a cross-link (1'-histidyl-3'-tyrosine (His-Tyr)); it reads HPEVY. Fe(II)-heme a is bound at residue His419. A heme b-binding site is contributed by His421.

It belongs to the heme-copper respiratory oxidase family. As to quaternary structure, heterotetramer of the subunits 1, 2, 3 and 4.

The protein localises to the cell membrane. Its function is as follows. Catalytic subunit of the enzyme. Electrons originating in a quinol are transferred to the bimetallic center formed by heme a and copper B. This chain is Ubiquinol oxidase subunit 1 (cyaA), found in Acetobacter aceti.